The following is a 144-amino-acid chain: Large ribosomal subunit protein uL15 (144 aa).

The interval 1 to 53 is disordered; it reads MYLNTLAPAEGAKHSAKRLGRGIGSGLGKTGGRGHKGQKSRTGGGVRRGFEGG. Residues 21–31 are compositionally biased toward gly residues; it reads RGIGSGLGKTG.

The protein belongs to the universal ribosomal protein uL15 family. As to quaternary structure, part of the 50S ribosomal subunit.

Binds to the 23S rRNA. This is Large ribosomal subunit protein uL15 from Mannheimia succiniciproducens (strain KCTC 0769BP / MBEL55E).